A 288-amino-acid chain; its full sequence is Protoheme IX farnesyltransferase (288 aa).

9 helical membrane-spanning segments follow: residues 8-28, 35-55, 75-95, 105-125, 130-150, 161-181, 205-225, 230-250, and 265-285; these read IIKP…FLLA, VNLF…ASIF, IAIG…LLIL, FLTI…YSLL, SVYS…IGYC, FILL…IGLV, INII…FFAG, NYLF…IKGF, and IFLF…IDYK.

Belongs to the UbiA prenyltransferase family. Protoheme IX farnesyltransferase subfamily.

The protein resides in the cell membrane. The catalysed reaction is heme b + (2E,6E)-farnesyl diphosphate + H2O = Fe(II)-heme o + diphosphate. It participates in porphyrin-containing compound metabolism; heme O biosynthesis; heme O from protoheme: step 1/1. Its function is as follows. Converts heme B (protoheme IX) to heme O by substitution of the vinyl group on carbon 2 of heme B porphyrin ring with a hydroxyethyl farnesyl side group. The polypeptide is Protoheme IX farnesyltransferase (Wigglesworthia glossinidia brevipalpis).